Consider the following 184-residue polypeptide: J-type co-chaperone JAC1, mitochondrial (184 aa).

A mitochondrion-targeting transit peptide spans 1 to 10 (MLKYLVQRRF). One can recognise a J domain in the interval 13-82 (TFYELFPKTF…LRRSQYMLKL (70 aa)). An HSP70 binding motif is present at residues 48 to 50 (HPD). An interaction with ISU1 region spans residues 71-184 (DPLRRSQYML…APGKQLEMNH (114 aa)).

Belongs to the HscB family. In terms of assembly, interacts with ISU1 and SSQ1.

It is found in the mitochondrion matrix. Its function is as follows. Co-chaperone required for the assembly of iron-sulfur (Fe/S) clusters in mitochondria. Stimulates the ATPase activity of its specialized Hsp70 chaperone partner SSQ1, to mediate the transfer of iron-sulfur clusters from ISU1 to GRX5. Binds to the substrate protein ISU1 and targets it to SSQ1. The chain is J-type co-chaperone JAC1, mitochondrial from Saccharomyces cerevisiae (strain ATCC 204508 / S288c) (Baker's yeast).